The chain runs to 376 residues: Queuine tRNA-ribosyltransferase accessory subunit 2 (376 aa).

Residues cysteine 323, cysteine 325, cysteine 328, and histidine 354 each contribute to the Zn(2+) site.

The protein belongs to the queuine tRNA-ribosyltransferase family. QTRT2 subfamily. Heterodimer of a catalytic subunit and an accessory subunit. Requires Zn(2+) as cofactor.

The protein resides in the cytoplasm. Non-catalytic subunit of the queuine tRNA-ribosyltransferase (TGT) that catalyzes the base-exchange of a guanine (G) residue with queuine (Q) at position 34 (anticodon wobble position) in tRNAs with GU(N) anticodons (tRNA-Asp, -Asn, -His and -Tyr), resulting in the hypermodified nucleoside queuosine (7-(((4,5-cis-dihydroxy-2-cyclopenten-1-yl)amino)methyl)-7-deazaguanosine). The polypeptide is Queuine tRNA-ribosyltransferase accessory subunit 2 (Caenorhabditis briggsae).